A 487-amino-acid chain; its full sequence is GlcNAc-binding protein A (487 aa).

The N-terminal stretch at 1–29 (MKKLPNKSLIALALLSVSGASFGHGYVSA) is a signal peptide. A Chitin-binding type-4 domain is found at 30 to 201 (YENGVAEGRA…SFYNVIDVKF (172 aa)). The 42-residue stretch at 438 to 479 (AGTKVLASDGAVYQCKEFPFSGYCTQWSPSATQFEPGKGSHW) folds into the Chitin-binding type-3 domain.

Belongs to the GbpA family.

The protein localises to the secreted. In terms of biological role, probably interacts with GlcNAc residues. May promote attachment to both epithelial cell surfaces and chitin. This chain is GlcNAc-binding protein A, found in Vibrio campbellii (strain ATCC BAA-1116).